Consider the following 231-residue polypeptide: Large ribosomal subunit protein uL1 (231 aa).

The protein belongs to the universal ribosomal protein uL1 family. Part of the 50S ribosomal subunit.

In terms of biological role, binds directly to 23S rRNA. The L1 stalk is quite mobile in the ribosome, and is involved in E site tRNA release. Functionally, protein L1 is also a translational repressor protein, it controls the translation of the L11 operon by binding to its mRNA. The sequence is that of Large ribosomal subunit protein uL1 from Francisella tularensis subsp. tularensis (strain FSC 198).